The chain runs to 290 residues: 33 kDa chaperonin (290 aa).

2 disulfide bridges follow: Cys-235/Cys-237 and Cys-268/Cys-271.

Belongs to the HSP33 family. Under oxidizing conditions two disulfide bonds are formed involving the reactive cysteines. Under reducing conditions zinc is bound to the reactive cysteines and the protein is inactive.

It is found in the cytoplasm. Functionally, redox regulated molecular chaperone. Protects both thermally unfolding and oxidatively damaged proteins from irreversible aggregation. Plays an important role in the bacterial defense system toward oxidative stress. This is 33 kDa chaperonin from Streptococcus equi subsp. zooepidemicus (strain MGCS10565).